A 176-amino-acid chain; its full sequence is Large ribosomal subunit protein uL6 (176 aa).

The protein belongs to the universal ribosomal protein uL6 family. Part of the 50S ribosomal subunit.

Functionally, this protein binds to the 23S rRNA, and is important in its secondary structure. It is located near the subunit interface in the base of the L7/L12 stalk, and near the tRNA binding site of the peptidyltransferase center. In Burkholderia ambifaria (strain ATCC BAA-244 / DSM 16087 / CCUG 44356 / LMG 19182 / AMMD) (Burkholderia cepacia (strain AMMD)), this protein is Large ribosomal subunit protein uL6.